The chain runs to 447 residues: N-succinylarginine dihydrolase (447 aa).

Residues 19–28, asparagine 110, and 137–138 each bind substrate; these read AGLSFGNEAS and HR. Glutamate 174 is an active-site residue. A substrate-binding site is contributed by arginine 212. The active site involves histidine 248. Residues aspartate 250 and asparagine 359 each coordinate substrate. Cysteine 365 acts as the Nucleophile in catalysis.

It belongs to the succinylarginine dihydrolase family. As to quaternary structure, homodimer.

The catalysed reaction is N(2)-succinyl-L-arginine + 2 H2O + 2 H(+) = N(2)-succinyl-L-ornithine + 2 NH4(+) + CO2. The protein operates within amino-acid degradation; L-arginine degradation via AST pathway; L-glutamate and succinate from L-arginine: step 2/5. Catalyzes the hydrolysis of N(2)-succinylarginine into N(2)-succinylornithine, ammonia and CO(2). This chain is N-succinylarginine dihydrolase, found in Salmonella arizonae (strain ATCC BAA-731 / CDC346-86 / RSK2980).